A 246-amino-acid chain; its full sequence is Pyruvate formate-lyase 1-activating enzyme (246 aa).

The Radical SAM core domain maps to 16–239 (VDGPGIRFIT…MERVKGILEQ (224 aa)). Positions 30, 34, and 37 each coordinate [4Fe-4S] cluster. S-adenosyl-L-methionine-binding positions include 36–38 (YCH), G79, 130–132 (DLK), and H203.

The protein belongs to the organic radical-activating enzymes family. [4Fe-4S] cluster serves as cofactor.

It localises to the cytoplasm. The enzyme catalyses glycyl-[formate C-acetyltransferase] + reduced [flavodoxin] + S-adenosyl-L-methionine = glycin-2-yl radical-[formate C-acetyltransferase] + semiquinone [flavodoxin] + 5'-deoxyadenosine + L-methionine + H(+). In terms of biological role, activation of pyruvate formate-lyase 1 under anaerobic conditions by generation of an organic free radical, using S-adenosylmethionine and reduced flavodoxin as cosubstrates to produce 5'-deoxy-adenosine. The protein is Pyruvate formate-lyase 1-activating enzyme (pflA) of Escherichia coli O157:H7.